Here is a 350-residue protein sequence, read N- to C-terminus: Phosphoribosylformylglycinamidine cyclo-ligase (350 aa).

The protein belongs to the AIR synthase family.

It localises to the cytoplasm. The enzyme catalyses 2-formamido-N(1)-(5-O-phospho-beta-D-ribosyl)acetamidine + ATP = 5-amino-1-(5-phospho-beta-D-ribosyl)imidazole + ADP + phosphate + H(+). It functions in the pathway purine metabolism; IMP biosynthesis via de novo pathway; 5-amino-1-(5-phospho-D-ribosyl)imidazole from N(2)-formyl-N(1)-(5-phospho-D-ribosyl)glycinamide: step 2/2. This is Phosphoribosylformylglycinamidine cyclo-ligase from Syntrophotalea carbinolica (strain DSM 2380 / NBRC 103641 / GraBd1) (Pelobacter carbinolicus).